Here is a 1357-residue protein sequence, read N- to C-terminus: DNA-directed RNA polymerase subunit beta (1357 aa).

Belongs to the RNA polymerase beta chain family. In terms of assembly, the RNAP catalytic core consists of 2 alpha, 1 beta, 1 beta' and 1 omega subunit. When a sigma factor is associated with the core the holoenzyme is formed, which can initiate transcription.

The enzyme catalyses RNA(n) + a ribonucleoside 5'-triphosphate = RNA(n+1) + diphosphate. In terms of biological role, DNA-dependent RNA polymerase catalyzes the transcription of DNA into RNA using the four ribonucleoside triphosphates as substrates. This Pseudomonas paraeruginosa (strain DSM 24068 / PA7) (Pseudomonas aeruginosa (strain PA7)) protein is DNA-directed RNA polymerase subunit beta.